Reading from the N-terminus, the 180-residue chain is Probable nicotinate-nucleotide adenylyltransferase (180 aa).

The protein belongs to the NadD family.

It catalyses the reaction nicotinate beta-D-ribonucleotide + ATP + H(+) = deamido-NAD(+) + diphosphate. It participates in cofactor biosynthesis; NAD(+) biosynthesis; deamido-NAD(+) from nicotinate D-ribonucleotide: step 1/1. Its function is as follows. Catalyzes the reversible adenylation of nicotinate mononucleotide (NaMN) to nicotinic acid adenine dinucleotide (NaAD). This is Probable nicotinate-nucleotide adenylyltransferase from Pelagibacter ubique (strain HTCC1062).